The chain runs to 245 residues: Thiopurine S-methyltransferase (245 aa).

29-40 (WQEKWVSRRIGF) lines the S-adenosyl-L-methionine pocket. A substrate-binding site is contributed by Phe40. Lys58 is modified (N6-acetyllysine). 3 residues coordinate S-adenosyl-L-methionine: Leu69, Glu90, and Arg152.

It belongs to the class I-like SAM-binding methyltransferase superfamily. TPMT family. In terms of assembly, monomer.

Its subcellular location is the cytoplasm. It carries out the reaction S-adenosyl-L-methionine + a thiopurine = S-adenosyl-L-homocysteine + a thiopurine S-methylether.. In Lycaon pictus (African wild dog), this protein is Thiopurine S-methyltransferase (TPMT).